A 1136-amino-acid polypeptide reads, in one-letter code: MPKRTDIKSVMVIGSGPIVIGQAAEFDYSGTQACRVLREEGVRVILVNSNPATIMTDPEMADATYIDPISTPILEKIIAKERPDALLPTLGGQTALNAAVALGEAGVLKKYNVELIGASLEAIDRGEDRESFKKVVKEAGAESARSDIAHTLEEVDAIAERFGFPLVVRPSFTMGGLGSGIAHDTEELHRIAGAGIHYSPTDEVLIEEGIEGWKEYELELMRDRNDNVVVVCPIENVDPVGVHTGDSITVAPVFTLTDREYQKLRDIGIAIIRGVGVDTGGCNIQFAIHPDTGRIIVIEMNPRVSRSSALASKATGFPIAKIATKLALGYTLDEIQNDITRSTPASFEPTIDYVVTKVPRFAFEKFPGADPTLTTSMKSVGEAMALAGNFQESLGKAMRSIDKRHMGFSWDGEKPSEGEVHELLEQMRIPTEHRYLQVMRAIWGGATPEQIFNATKIDPWFIDQFFQINATAMQVRGAETLSKRLLRKAKLAGLSDVQIAHLRRLGDEGENTIRELRWNYGLHPVFKTVDTCAAEFAAQTPYYYSCYADETELRKREREAVIILGSGPNRIGQGIEFDYTCVHAVQELGKDYDTIMVNCNPETVSTDYDMSDRLYFEPLTFEDVLEIYEAEKKQGPIKGVIVQLGGQTPLSLAARLKAAGVPILGTTPEAIDLAENRELFGEVLRQEHLNAPRFGTALSLEEAREAAHNIGYPVLVRPSYVLGGRGMEIVYDDAQLETYVNRALSEAKADTVVSGRLPSPLLIDKFLQDAIEIDVDALFDGEELYIGGIMEHIEEAGVHSGDAACTLPPSTLSDDQIRRLREATLAIAKGCQVRGLMNVQYAFMANTLYVIEANPRASRTVPFASKATGVALAKAAARIMAGETIEQQRENGLLLPYGDGGDVRLGQQVAVKESVLPFKRFRTPVGKTVDILLGPEMRSTGEVMGFDRDFPHAFAKSQLASYEGGLPTNGNVFISVNDTDKRQLPLFAVRLVELGFEIWATEGTASVLRRYGIESKIVDKIHSRVDTDPEHPIEIQHAAGSVGKNVVELIEEGQIDLILNTPNSRGSRSDGYSIRAAAIAADIPQYTTMTEFSAVLLAIEAVKKNDYEVMSIQEHSRELYELERKHKEEGEEARAQ.

The interval Met1–Asp402 is carboxyphosphate synthetic domain. ATP contacts are provided by Arg129, Arg169, Gly175, Gly176, Glu208, Ile210, Glu215, Gly241, Val242, His243, Gln285, and Glu299. In terms of domain architecture, ATP-grasp 1 spans Lys133–Leu328. Mg(2+) contacts are provided by Gln285, Glu299, and Asn301. 3 residues coordinate Mn(2+): Gln285, Glu299, and Asn301. Positions Lys403 to Thr551 are oligomerization domain. The segment at Glu552–Tyr962 is carbamoyl phosphate synthetic domain. In terms of domain architecture, ATP-grasp 2 spans Gly681–Ala881. Residues Arg717, Lys765, Leu767, Glu772, Gly797, Val798, His799, Ser800, Gln840, and Glu852 each coordinate ATP. Residues Gln840, Glu852, and Asn854 each contribute to the Mg(2+) site. Positions 840, 852, and 854 each coordinate Mn(2+). Positions Glu963–Gln1136 are allosteric domain. Positions Gly964–Leu1122 constitute an MGS-like domain.

This sequence belongs to the CarB family. Composed of two chains; the small (or glutamine) chain promotes the hydrolysis of glutamine to ammonia, which is used by the large (or ammonia) chain to synthesize carbamoyl phosphate. Tetramer of heterodimers (alpha,beta)4. Mg(2+) serves as cofactor. Mn(2+) is required as a cofactor.

The catalysed reaction is hydrogencarbonate + L-glutamine + 2 ATP + H2O = carbamoyl phosphate + L-glutamate + 2 ADP + phosphate + 2 H(+). It carries out the reaction hydrogencarbonate + NH4(+) + 2 ATP = carbamoyl phosphate + 2 ADP + phosphate + 2 H(+). Its pathway is amino-acid biosynthesis; L-arginine biosynthesis; carbamoyl phosphate from bicarbonate: step 1/1. It functions in the pathway pyrimidine metabolism; UMP biosynthesis via de novo pathway; (S)-dihydroorotate from bicarbonate: step 1/3. Large subunit of the glutamine-dependent carbamoyl phosphate synthetase (CPSase). CPSase catalyzes the formation of carbamoyl phosphate from the ammonia moiety of glutamine, carbonate, and phosphate donated by ATP, constituting the first step of 2 biosynthetic pathways, one leading to arginine and/or urea and the other to pyrimidine nucleotides. The large subunit (synthetase) binds the substrates ammonia (free or transferred from glutamine from the small subunit), hydrogencarbonate and ATP and carries out an ATP-coupled ligase reaction, activating hydrogencarbonate by forming carboxy phosphate which reacts with ammonia to form carbamoyl phosphate. This chain is Carbamoyl phosphate synthase large chain, found in Bifidobacterium animalis subsp. lactis (strain AD011).